The following is a 249-amino-acid chain: Triosephosphate isomerase (249 aa).

Substrate is bound by residues Asn12 and Lys14. Lys14 carries the N6-acetyllysine modification. Tyr68 carries the 3'-nitrotyrosine modification. Residues Ser80 and Ser106 each carry the phosphoserine modification. Lys142 participates in a covalent cross-link: Glycyl lysine isopeptide (Lys-Gly) (interchain with G-Cter in SUMO1). Lys149 is subject to N6-succinyllysine. Lys156 carries the N6-acetyllysine; alternate modification. The residue at position 156 (Lys156) is an N6-succinyllysine; alternate. Position 159 is a phosphoserine (Ser159). The Proton acceptor role is filled by Glu166. Position 173 is a phosphothreonine (Thr173). Lys194 carries the post-translational modification N6-acetyllysine; alternate. The residue at position 194 (Lys194) is an N6-succinyllysine; alternate. An N6-methyllysine; alternate modification is found at Lys194. Ser198 carries the post-translational modification Phosphoserine. Tyr209 is modified (3'-nitrotyrosine). Ser212 carries the post-translational modification Phosphoserine. Thr214 is subject to Phosphothreonine. The residue at position 223 (Ser223) is a Phosphoserine. N6-acetyllysine is present on Lys238.

Belongs to the triosephosphate isomerase family. In terms of assembly, homodimer.

It localises to the cytoplasm. The catalysed reaction is D-glyceraldehyde 3-phosphate = dihydroxyacetone phosphate. It catalyses the reaction dihydroxyacetone phosphate = methylglyoxal + phosphate. Its pathway is carbohydrate biosynthesis; gluconeogenesis. The protein operates within carbohydrate degradation; glycolysis; D-glyceraldehyde 3-phosphate from glycerone phosphate: step 1/1. Triosephosphate isomerase is an extremely efficient metabolic enzyme that catalyzes the interconversion between dihydroxyacetone phosphate (DHAP) and D-glyceraldehyde-3-phosphate (G3P) in glycolysis and gluconeogenesis. Its function is as follows. It is also responsible for the non-negligible production of methylglyoxal a reactive cytotoxic side-product that modifies and can alter proteins, DNA and lipids. This Mesocricetus auratus (Golden hamster) protein is Triosephosphate isomerase.